We begin with the raw amino-acid sequence, 209 residues long: Cytidylate kinase (209 aa).

Gly-7–Thr-15 lines the ATP pocket.

It belongs to the cytidylate kinase family. Type 1 subfamily.

It is found in the cytoplasm. It catalyses the reaction CMP + ATP = CDP + ADP. It carries out the reaction dCMP + ATP = dCDP + ADP. This Afipia carboxidovorans (strain ATCC 49405 / DSM 1227 / KCTC 32145 / OM5) (Oligotropha carboxidovorans) protein is Cytidylate kinase.